Consider the following 420-residue polypeptide: Glutamate dehydrogenase (420 aa).

K105 is a catalytic residue. 220–226 (GYGNAGY) contacts NAD(+).

Belongs to the Glu/Leu/Phe/Val dehydrogenases family. Homohexamer.

It is found in the cytoplasm. The enzyme catalyses L-glutamate + NAD(+) + H2O = 2-oxoglutarate + NH4(+) + NADH + H(+). The catalysed reaction is L-glutamate + NADP(+) + H2O = 2-oxoglutarate + NH4(+) + NADPH + H(+). This Pyrococcus endeavori protein is Glutamate dehydrogenase (gdhA).